We begin with the raw amino-acid sequence, 72 residues long: Mu-like prophage FluMu protein C (72 aa).

The H-T-H motif DNA-binding region spans 35 to 55 (NVPDLIKKYRLSESTIYAILR).

It belongs to the c/mor transcriptional regulatory family.

Its function is as follows. Required for transcription of the phage late genes. This Haemophilus influenzae (strain ATCC 51907 / DSM 11121 / KW20 / Rd) protein is Mu-like prophage FluMu protein C.